An 82-amino-acid polypeptide reads, in one-letter code: Metallothionein-like protein 2A (82 aa).

Belongs to the metallothionein superfamily. Type 15 family. Expressed in stems, leaves, rachis, inflorescences and seeds.

In terms of biological role, metallothioneins have a high content of cysteine residues that bind various heavy metals. This chain is Metallothionein-like protein 2A (MT2A), found in Oryza sativa subsp. japonica (Rice).